The chain runs to 230 residues: Small ribosomal subunit protein uS3 (230 aa).

The 53-residue stretch at 43–95 (VNRVIIYSARPKMISEERKAHLAKLLELKFGLEKPVIEVLPIENPNLDAHVIA) folds into the KH type-2 domain.

The protein belongs to the universal ribosomal protein uS3 family. In terms of assembly, part of the 30S ribosomal subunit.

In terms of biological role, binds the lower part of the 30S subunit head. This Nanoarchaeum equitans (strain Kin4-M) protein is Small ribosomal subunit protein uS3.